Here is a 387-residue protein sequence, read N- to C-terminus: Formate-dependent phosphoribosylglycinamide formyltransferase (387 aa).

N(1)-(5-phospho-beta-D-ribosyl)glycinamide-binding positions include 21 to 22 (EL) and Glu-81. Residues Arg-113, Lys-154, 159-164 (SSGHGQ), 193-196 (EEFV), and Glu-201 each bind ATP. An ATP-grasp domain is found at 118 to 306 (VFAAETLDLK…EFALHVRAVL (189 aa)). Mg(2+) contacts are provided by Glu-265 and Glu-277. Residues Asp-284, Lys-352, and 359–360 (RR) each bind N(1)-(5-phospho-beta-D-ribosyl)glycinamide.

It belongs to the PurK/PurT family. In terms of assembly, homodimer.

The enzyme catalyses N(1)-(5-phospho-beta-D-ribosyl)glycinamide + formate + ATP = N(2)-formyl-N(1)-(5-phospho-beta-D-ribosyl)glycinamide + ADP + phosphate + H(+). It functions in the pathway purine metabolism; IMP biosynthesis via de novo pathway; N(2)-formyl-N(1)-(5-phospho-D-ribosyl)glycinamide from N(1)-(5-phospho-D-ribosyl)glycinamide (formate route): step 1/1. Involved in the de novo purine biosynthesis. Catalyzes the transfer of formate to 5-phospho-ribosyl-glycinamide (GAR), producing 5-phospho-ribosyl-N-formylglycinamide (FGAR). Formate is provided by PurU via hydrolysis of 10-formyl-tetrahydrofolate. This Sulfurovum sp. (strain NBC37-1) protein is Formate-dependent phosphoribosylglycinamide formyltransferase.